The following is a 109-amino-acid chain: Peptide chaperone MftB (109 aa).

This sequence belongs to the peptide chaperone MftB family.

In terms of biological role, peptide chaperone involved in the biosynthesis of the enzyme cofactor mycofactocin (MFT). Binds MftA and MftC with high affinity, and is essential for MftC activity on MftA, likely via the formation of a ternary complex. The chain is Peptide chaperone MftB from Mycobacterium tuberculosis (strain ATCC 25618 / H37Rv).